A 114-amino-acid polypeptide reads, in one-letter code: Non-specific lipid-transfer protein 2 (114 aa).

The first 23 residues, 1-23 (MEMVNKIACFVLLCMVVVAPHAE), serve as a signal peptide directing secretion. 4 cysteine pairs are disulfide-bonded: Cys-27–Cys-73, Cys-37–Cys-50, Cys-51–Cys-96, and Cys-71–Cys-110.

This sequence belongs to the plant LTP family.

Its function is as follows. Plant non-specific lipid-transfer proteins transfer phospholipids as well as galactolipids across membranes. May play a role in wax or cutin deposition in the cell walls of expanding epidermal cells and certain secretory tissues. This chain is Non-specific lipid-transfer protein 2 (LTP2), found in Solanum pennellii (Tomato).